A 344-amino-acid chain; its full sequence is F17a-G fimbrial adhesin (344 aa).

Positions 1 to 22 are cleaved as a signal peptide; that stretch reads MTNFYKVFLAVFILVCCNISQA. Residues 23–199 form a receptor-binding lectin domain region; it reads AVSFIGSTEN…SLNPFTLNDT (177 aa). Residues 65–66, 110–111, and 139–142 contribute to the a carbohydrate site; these read AN, DT, and STQG. The cysteines at positions 75 and 132 are disulfide-linked. The tract at residues 200–344 is fimbrillin-binding domain; sequence VTSCRLLTPS…GISTFTFSYQ (145 aa). The disordered stretch occupies residues 288–308; the sequence is LKFGPDSPVKGNENQWQLSTG. Positions 299-308 are enriched in polar residues; the sequence is NENQWQLSTG.

The protein belongs to the fimbrial protein family.

It is found in the fimbrium. Functionally, essential fimbrial adhesion factor that mediates binding to N-acetylglucosamine-containing receptors in the host intestinal microvilli, leading to colonization of the intestinal tissue, and diarrhea or septicemia. Also confers adhesiveness to laminin and basement membranes. The chain is F17a-G fimbrial adhesin (f17aG) from Escherichia coli.